We begin with the raw amino-acid sequence, 135 residues long: Large ribosomal subunit protein bL19 (135 aa).

Belongs to the bacterial ribosomal protein bL19 family.

Functionally, this protein is located at the 30S-50S ribosomal subunit interface and may play a role in the structure and function of the aminoacyl-tRNA binding site. This chain is Large ribosomal subunit protein bL19, found in Xanthomonas axonopodis pv. citri (strain 306).